We begin with the raw amino-acid sequence, 859 residues long: Nitrate reductase [NADPH] (859 aa).

A Mo-molybdopterin-binding site is contributed by Cys137. The region spanning 502 to 578 is the Cytochrome b5 heme-binding domain; sequence DVVIKYSEFE…LPSMHLGRLE (77 aa). Positions 538 and 561 each coordinate heme. An FAD-binding FR-type domain is found at 602 to 713; the sequence is RKWHKITLAE…KGPVGEFEYV (112 aa). FAD contacts are provided by residues 655 to 658, 672 to 676, Phe677, 687 to 689, Ser737, and Thr740; these read RAYT, LIKVY, and IMT. 829 to 838 lines the NADP(+) pocket; that stretch reads MLLVCGPPGM.

It belongs to the nitrate reductase family. As to quaternary structure, homodimer. FAD serves as cofactor. Heme is required as a cofactor. Requires Mo-molybdopterin as cofactor.

The enzyme catalyses nitrite + NADP(+) + H2O = nitrate + NADPH + H(+). In terms of biological role, nitrate reductase is a key enzyme involved in the first step of nitrate assimilation in plants, fungi and bacteria. The sequence is that of Nitrate reductase [NADPH] (YNR1) from Pichia angusta (Yeast).